Consider the following 139-residue polypeptide: MRHGNSGRKLNRTASHRKAMFANMAIALIKHEQIVTTLPKAKELRPYVEKLITLGKRGDLHARRQAYAALPDKVWAAKLFDVLGPRYQERQGGYIRVLKAGFRHGDSAPMAVIEFVDRDESAKGQDSGPVHVEGDEEAA.

The disordered stretch occupies residues 120–139 (ESAKGQDSGPVHVEGDEEAA).

Belongs to the bacterial ribosomal protein bL17 family. As to quaternary structure, part of the 50S ribosomal subunit. Contacts protein L32.

The polypeptide is Large ribosomal subunit protein bL17 (Parvibaculum lavamentivorans (strain DS-1 / DSM 13023 / NCIMB 13966)).